Consider the following 95-residue polypeptide: Aspartyl/glutamyl-tRNA(Asn/Gln) amidotransferase subunit C (95 aa).

Belongs to the GatC family. In terms of assembly, heterotrimer of A, B and C subunits.

The catalysed reaction is L-glutamyl-tRNA(Gln) + L-glutamine + ATP + H2O = L-glutaminyl-tRNA(Gln) + L-glutamate + ADP + phosphate + H(+). The enzyme catalyses L-aspartyl-tRNA(Asn) + L-glutamine + ATP + H2O = L-asparaginyl-tRNA(Asn) + L-glutamate + ADP + phosphate + 2 H(+). In terms of biological role, allows the formation of correctly charged Asn-tRNA(Asn) or Gln-tRNA(Gln) through the transamidation of misacylated Asp-tRNA(Asn) or Glu-tRNA(Gln) in organisms which lack either or both of asparaginyl-tRNA or glutaminyl-tRNA synthetases. The reaction takes place in the presence of glutamine and ATP through an activated phospho-Asp-tRNA(Asn) or phospho-Glu-tRNA(Gln). The protein is Aspartyl/glutamyl-tRNA(Asn/Gln) amidotransferase subunit C of Clostridium botulinum (strain ATCC 19397 / Type A).